The sequence spans 53 residues: MPFTASDICKIIFAVILPPLGVFLERGCNSDLLINILLTILGVGSILASMNPA.

The helical transmembrane segment at 32-52 (LLINILLTILGVGSILASMNP) threads the bilayer.

Belongs to the UPF0057 (PMP3) family.

The protein resides in the cell membrane. Functionally, plays a role in the regulation of membrane potential. Could mediate a proton leak. The chain is Plasma membrane proteolipid 3 (PMP3) from Chaetomium globosum (strain ATCC 6205 / CBS 148.51 / DSM 1962 / NBRC 6347 / NRRL 1970) (Soil fungus).